The chain runs to 694 residues: Glycine--tRNA ligase beta subunit (694 aa).

It belongs to the class-II aminoacyl-tRNA synthetase family. In terms of assembly, tetramer of two alpha and two beta subunits.

The protein resides in the cytoplasm. It catalyses the reaction tRNA(Gly) + glycine + ATP = glycyl-tRNA(Gly) + AMP + diphosphate. This is Glycine--tRNA ligase beta subunit from Shewanella denitrificans (strain OS217 / ATCC BAA-1090 / DSM 15013).